Consider the following 356-residue polypeptide: Histidinol-phosphate aminotransferase (356 aa).

N6-(pyridoxal phosphate)lysine is present on Lys-213.

The protein belongs to the class-II pyridoxal-phosphate-dependent aminotransferase family. Histidinol-phosphate aminotransferase subfamily. Homodimer. It depends on pyridoxal 5'-phosphate as a cofactor.

It catalyses the reaction L-histidinol phosphate + 2-oxoglutarate = 3-(imidazol-4-yl)-2-oxopropyl phosphate + L-glutamate. It participates in amino-acid biosynthesis; L-histidine biosynthesis; L-histidine from 5-phospho-alpha-D-ribose 1-diphosphate: step 7/9. The chain is Histidinol-phosphate aminotransferase from Clostridium novyi (strain NT).